The chain runs to 349 residues: GTP 3',8-cyclase (349 aa).

The Radical SAM core domain occupies 24-249 (PFGRAITYLR…VDSDYQTGGP (226 aa)). R33 is a binding site for GTP. [4Fe-4S] cluster contacts are provided by C40 and C44. Y46 is an S-adenosyl-L-methionine binding site. C47 serves as a coordination point for [4Fe-4S] cluster. R82 lines the GTP pocket. G86 serves as a coordination point for S-adenosyl-L-methionine. Residue T116 coordinates GTP. Residue S140 participates in S-adenosyl-L-methionine binding. Position 176 (K176) interacts with GTP. M210 is an S-adenosyl-L-methionine binding site. Positions 273 and 276 each coordinate [4Fe-4S] cluster. 278–280 (RVR) provides a ligand contact to GTP. C290 provides a ligand contact to [4Fe-4S] cluster.

It belongs to the radical SAM superfamily. MoaA family. As to quaternary structure, monomer and homodimer. Requires [4Fe-4S] cluster as cofactor.

It catalyses the reaction GTP + AH2 + S-adenosyl-L-methionine = (8S)-3',8-cyclo-7,8-dihydroguanosine 5'-triphosphate + 5'-deoxyadenosine + L-methionine + A + H(+). The protein operates within cofactor biosynthesis; molybdopterin biosynthesis. In terms of biological role, catalyzes the cyclization of GTP to (8S)-3',8-cyclo-7,8-dihydroguanosine 5'-triphosphate. In Agrobacterium fabrum (strain C58 / ATCC 33970) (Agrobacterium tumefaciens (strain C58)), this protein is GTP 3',8-cyclase.